Consider the following 384-residue polypeptide: BarH-like 2 homeobox protein (384 aa).

Disordered regions lie at residues 1 to 134 (MTAM…APRT), 154 to 237 (CAPY…TAFS), and 364 to 384 (PGGQPALNPLSNPIPGTPHPR). A compositionally biased stretch (low complexity) spans 119 to 134 (QSAAQQLGSAAAAPRT). Basic and acidic residues predominate over residues 177–217 (ESFRPKLEQEDSKTKLDKREDSQSDIKCHGTKEEGDREITS). A DNA-binding region (homeobox) is located at residues 229–288 (PRKARTAFSDHQLNQLERSFERQKYLSVQDRMDLAAALNLTDTQVKTWYQNRRTKWKRQT).

This sequence belongs to the BAR homeobox family. In terms of tissue distribution, expressed in the ganglion cell layer of the retina in the eye and in the ventral zone of the dorsal thalamus of the CNS.

The protein resides in the nucleus. Potential regulator of neural basic helix-loop-helix genes. It may down-regulate expression of ASCL1 and, within the thalamus, up-regulate NGN2, thereby regulating distinct patterns of neuronal differentiation. The protein is BarH-like 2 homeobox protein (Barhl2) of Rattus norvegicus (Rat).